The primary structure comprises 392 residues: Anhydro-N-acetylmuramic acid kinase (392 aa).

An ATP-binding site is contributed by 19–26; that stretch reads GTSVDGID.

This sequence belongs to the anhydro-N-acetylmuramic acid kinase family.

It catalyses the reaction 1,6-anhydro-N-acetyl-beta-muramate + ATP + H2O = N-acetyl-D-muramate 6-phosphate + ADP + H(+). It participates in amino-sugar metabolism; 1,6-anhydro-N-acetylmuramate degradation. It functions in the pathway cell wall biogenesis; peptidoglycan recycling. Catalyzes the specific phosphorylation of 1,6-anhydro-N-acetylmuramic acid (anhMurNAc) with the simultaneous cleavage of the 1,6-anhydro ring, generating MurNAc-6-P. Is required for the utilization of anhMurNAc either imported from the medium or derived from its own cell wall murein, and thus plays a role in cell wall recycling. This Trichormus variabilis (strain ATCC 29413 / PCC 7937) (Anabaena variabilis) protein is Anhydro-N-acetylmuramic acid kinase.